Reading from the N-terminus, the 1102-residue chain is Carbamoyl phosphate synthase large chain (1102 aa).

The carboxyphosphate synthetic domain stretch occupies residues 1–408; the sequence is MPKRSDIQSV…ALQKALRSLE (408 aa). ATP-binding residues include Arg129, Arg175, Gly181, Gly182, Glu214, Ile216, Glu221, Gly247, Val248, His249, Gln291, and Glu305. The ATP-grasp 1 domain occupies 137 to 334; sequence EAVKEKIGYG…IAKIAAKLAV (198 aa). The Mg(2+) site is built by Gln291, Glu305, and Asn307. Mn(2+)-binding residues include Gln291, Glu305, and Asn307. Positions 409–551 are oligomerization domain; the sequence is KKGSQFAFTG…YFYSSYDEES (143 aa). The tract at residues 552-954 is carbamoyl phosphate synthetic domain; sequence EVAPRTKPAV…AYAKSQAGAY (403 aa). The ATP-grasp 2 domain occupies 682–873; the sequence is GRVLAEAGLP…LAKAAARISL (192 aa). ATP-binding residues include Arg718, Arg757, Leu759, Glu764, Gly789, Ile790, His791, Ser792, Gln832, and Glu844. Positions 832, 844, and 846 each coordinate Mg(2+). Mn(2+)-binding residues include Gln832, Glu844, and Asn846. The region spanning 955–1100 is the MGS-like domain; the sequence is GPLPTAGRAF…QEHAEHLTAA (146 aa). The allosteric domain stretch occupies residues 955-1102; that stretch reads GPLPTAGRAF…HAEHLTAARD (148 aa).

It belongs to the CarB family. In terms of assembly, composed of two chains; the small (or glutamine) chain promotes the hydrolysis of glutamine to ammonia, which is used by the large (or ammonia) chain to synthesize carbamoyl phosphate. Tetramer of heterodimers (alpha,beta)4. It depends on Mg(2+) as a cofactor. Mn(2+) serves as cofactor.

The enzyme catalyses hydrogencarbonate + L-glutamine + 2 ATP + H2O = carbamoyl phosphate + L-glutamate + 2 ADP + phosphate + 2 H(+). It catalyses the reaction hydrogencarbonate + NH4(+) + 2 ATP = carbamoyl phosphate + 2 ADP + phosphate + 2 H(+). Its pathway is amino-acid biosynthesis; L-arginine biosynthesis; carbamoyl phosphate from bicarbonate: step 1/1. It functions in the pathway pyrimidine metabolism; UMP biosynthesis via de novo pathway; (S)-dihydroorotate from bicarbonate: step 1/3. Large subunit of the glutamine-dependent carbamoyl phosphate synthetase (CPSase). CPSase catalyzes the formation of carbamoyl phosphate from the ammonia moiety of glutamine, carbonate, and phosphate donated by ATP, constituting the first step of 2 biosynthetic pathways, one leading to arginine and/or urea and the other to pyrimidine nucleotides. The large subunit (synthetase) binds the substrates ammonia (free or transferred from glutamine from the small subunit), hydrogencarbonate and ATP and carries out an ATP-coupled ligase reaction, activating hydrogencarbonate by forming carboxy phosphate which reacts with ammonia to form carbamoyl phosphate. In Streptomyces griseus subsp. griseus (strain JCM 4626 / CBS 651.72 / NBRC 13350 / KCC S-0626 / ISP 5235), this protein is Carbamoyl phosphate synthase large chain.